Consider the following 348-residue polypeptide: UPF0283 membrane protein PMI1371 (348 aa).

A run of 2 helical transmembrane segments spans residues 69–89 (LITV…GQWI) and 99–119 (IALG…GSVI).

Belongs to the UPF0283 family.

Its subcellular location is the cell inner membrane. In Proteus mirabilis (strain HI4320), this protein is UPF0283 membrane protein PMI1371.